A 562-amino-acid chain; its full sequence is NAD-dependent malic enzyme (562 aa).

The Proton donor role is filled by tyrosine 101. Residue arginine 154 participates in NAD(+) binding. Lysine 172 functions as the Proton acceptor in the catalytic mechanism. Glutamate 243, aspartate 244, and aspartate 267 together coordinate a divalent metal cation. NAD(+) contacts are provided by aspartate 267 and asparagine 415.

It belongs to the malic enzymes family. In terms of assembly, homotetramer. Mg(2+) serves as cofactor. Mn(2+) is required as a cofactor.

The enzyme catalyses (S)-malate + NAD(+) = pyruvate + CO2 + NADH. The catalysed reaction is oxaloacetate + H(+) = pyruvate + CO2. The protein is NAD-dependent malic enzyme of Shewanella halifaxensis (strain HAW-EB4).